The chain runs to 407 residues: Zinc finger protein 174 (407 aa).

Residues 1–20 (MAAKMEITLSSNTEASSKQE) form a disordered region. K26 participates in a covalent cross-link: Glycyl lysine isopeptide (Lys-Gly) (interchain with G-Cter in SUMO2). The region spanning 59–124 (GPQEALSQLR…KEIVTLVEDF (66 aa)) is the SCAN box domain. Residues 150–270 (GSQLGEQELP…RRQVSSPNAQ (121 aa)) form a disordered region. K204 is covalently cross-linked (Glycyl lysine isopeptide (Lys-Gly) (interchain with G-Cter in SUMO2)). The span at 211–221 (PRMRSDNKENP) shows a compositional bias: basic and acidic residues. Residues K230 and K271 each participate in a glycyl lysine isopeptide (Lys-Gly) (interchain with G-Cter in SUMO2) cross-link. C2H2-type zinc fingers lie at residues 326 to 348 (YKCD…KRVH), 354 to 376 (YTCG…QRIH), and 382 to 405 (YQCG…RLHH).

Belongs to the krueppel C2H2-type zinc-finger protein family. In terms of assembly, homodimer. In terms of tissue distribution, expressed in a variety of organs, but most strongly in adult testis and ovary followed by small intestine, colon, prostate, thymus, spleen, pancreas, skeletal muscle, heart, brain and kidney. Also expressed in umbilical vein endothelial cells, foreskin fibroblast and Hep-G2 cells.

Its subcellular location is the nucleus. Transcriptional repressor. The protein is Zinc finger protein 174 (ZNF174) of Homo sapiens (Human).